Reading from the N-terminus, the 331-residue chain is tRNA-cytidine(32) 2-sulfurtransferase (331 aa).

Residues 71 to 76 carry the PP-loop motif motif; sequence SGGKDS. [4Fe-4S] cluster is bound by residues Cys-146, Cys-149, and Cys-237.

The protein belongs to the TtcA family. In terms of assembly, homodimer. The cofactor is Mg(2+). [4Fe-4S] cluster serves as cofactor.

The protein localises to the cytoplasm. The enzyme catalyses cytidine(32) in tRNA + S-sulfanyl-L-cysteinyl-[cysteine desulfurase] + AH2 + ATP = 2-thiocytidine(32) in tRNA + L-cysteinyl-[cysteine desulfurase] + A + AMP + diphosphate + H(+). It participates in tRNA modification. In terms of biological role, catalyzes the ATP-dependent 2-thiolation of cytidine in position 32 of tRNA, to form 2-thiocytidine (s(2)C32). The sulfur atoms are provided by the cysteine/cysteine desulfurase (IscS) system. The protein is tRNA-cytidine(32) 2-sulfurtransferase of Burkholderia multivorans (strain ATCC 17616 / 249).